The primary structure comprises 657 residues: Transmembrane protein 232 (657 aa).

Transmembrane regions (helical) follow at residues 168 to 188 (IGYL…LESF) and 353 to 373 (WAWN…LYAA).

The protein localises to the membrane. Plays a critical role for male fertility and sperm motility by regulating sperm cytoplasm removal and maintaining axoneme integrity. The polypeptide is Transmembrane protein 232 (TMEM232) (Homo sapiens (Human)).